The following is a 487-amino-acid chain: Glucose starvation modulator protein 1 (487 aa).

The interval 1–75 (MSIRFPEIPG…KRLTPQEKKA (75 aa)) is disordered. Polar residues predominate over residues 59 to 68 (SFSSSMTKRL). Residues 83–111 (CVFCHSKHLQCSHSRPCQNCIKRNLAHEC) constitute a DNA-binding region (zn(2)-C6 fungal-type). A compositionally biased stretch (polar residues) spans 122–139 (MSTTEVPAVSGESSSESG). A disordered region spans residues 122–158 (MSTTEVPAVSGESSSESGRATGENGSEMGNPPDPQIA). The region spanning 348-420 (CLLDYENLSR…FRLFESVAVG (73 aa)) is the PAS domain.

This sequence belongs to the ERT1/acuK family.

Its subcellular location is the nucleus. In terms of biological role, transcription factor which regulates nonfermentable carbon utilization. This Clavispora lusitaniae (strain ATCC 42720) (Yeast) protein is Glucose starvation modulator protein 1 (GSM1).